The sequence spans 722 residues: Polyribonucleotide nucleotidyltransferase (722 aa).

Residues aspartate 486 and aspartate 492 each coordinate Mg(2+). Residues 553–612 (PRITTIQIRPEFIKNVIGPGGKVIKDIIARTGAAINIEDSGRVDIASANGEAVKAAIAMI) enclose the KH domain. The 69-residue stretch at 622 to 690 (GKIYTGTVRK…KTGKIRLSRK (69 aa)) folds into the S1 motif domain. Residues 696–722 (RAAQQGAAAGEAAAQPAPAPTQPDAKA) form a disordered region.

The protein belongs to the polyribonucleotide nucleotidyltransferase family. Requires Mg(2+) as cofactor.

Its subcellular location is the cytoplasm. It catalyses the reaction RNA(n+1) + phosphate = RNA(n) + a ribonucleoside 5'-diphosphate. Functionally, involved in mRNA degradation. Catalyzes the phosphorolysis of single-stranded polyribonucleotides processively in the 3'- to 5'-direction. The protein is Polyribonucleotide nucleotidyltransferase of Myxococcus xanthus (strain DK1622).